A 472-amino-acid polypeptide reads, in one-letter code: UDP-N-acetylmuramate--L-alanine ligase (472 aa).

Residue 122 to 128 participates in ATP binding; that stretch reads GSHGKTT.

Belongs to the MurCDEF family.

It localises to the cytoplasm. The catalysed reaction is UDP-N-acetyl-alpha-D-muramate + L-alanine + ATP = UDP-N-acetyl-alpha-D-muramoyl-L-alanine + ADP + phosphate + H(+). The protein operates within cell wall biogenesis; peptidoglycan biosynthesis. In terms of biological role, cell wall formation. In Myxococcus xanthus (strain DK1622), this protein is UDP-N-acetylmuramate--L-alanine ligase.